The sequence spans 431 residues: Glutamate-1-semialdehyde 2,1-aminomutase (431 aa).

Position 269 is an N6-(pyridoxal phosphate)lysine (Lys269).

It belongs to the class-III pyridoxal-phosphate-dependent aminotransferase family. HemL subfamily. Homodimer. Requires pyridoxal 5'-phosphate as cofactor.

It localises to the cytoplasm. It carries out the reaction (S)-4-amino-5-oxopentanoate = 5-aminolevulinate. Its pathway is porphyrin-containing compound metabolism; protoporphyrin-IX biosynthesis; 5-aminolevulinate from L-glutamyl-tRNA(Glu): step 2/2. It participates in porphyrin-containing compound metabolism; chlorophyll biosynthesis. This is Glutamate-1-semialdehyde 2,1-aminomutase from Chlorobium phaeovibrioides (strain DSM 265 / 1930) (Prosthecochloris vibrioformis (strain DSM 265)).